The sequence spans 710 residues: mRNA export factor crp79 (710 aa).

2 consecutive RRM domains span residues 19–102 (IYVG…KLTI) and 222–292 (HFKQ…PTTP). Positions 333-348 (QWGSVSTTGVSNQQNH) are enriched in polar residues. Residues 333-357 (QWGSVSTTGVSNQQNHPAAWNPDNK) form a disordered region. An RRM 3 domain is found at 401–474 (EDLFSPFGSI…DRIRRLQAFF (74 aa)). Over residues 502–524 (TIRKPIESSTNKISENPTTLSSK) the composition is skewed to polar residues. Residues 502–544 (TIRKPIESSTNKISENPTTLSSKVENKNEPKTGENKEPSQTNE) are disordered. Residues 525–538 (VENKNEPKTGENKE) show a composition bias toward basic and acidic residues.

It is found in the cytoplasm. It localises to the nucleus. In terms of biological role, binds the poly(A) tail of mRNA. Involved in the export of mRNA from the nucleus to the cytoplasm. The protein is mRNA export factor crp79 (crp79) of Schizosaccharomyces pombe (strain 972 / ATCC 24843) (Fission yeast).